Consider the following 251-residue polypeptide: Small ribosomal subunit protein uS2 (251 aa).

It belongs to the universal ribosomal protein uS2 family.

This Nitrosomonas eutropha (strain DSM 101675 / C91 / Nm57) protein is Small ribosomal subunit protein uS2.